The chain runs to 142 residues: Transcription antitermination protein NusB (142 aa).

This sequence belongs to the NusB family.

Its function is as follows. Involved in transcription antitermination. Required for transcription of ribosomal RNA (rRNA) genes. Binds specifically to the boxA antiterminator sequence of the ribosomal RNA (rrn) operons. This chain is Transcription antitermination protein NusB, found in Borreliella burgdorferi (strain ATCC 35210 / DSM 4680 / CIP 102532 / B31) (Borrelia burgdorferi).